Consider the following 665-residue polypeptide: Probable potassium transport system protein Kup 2 (665 aa).

The next 13 membrane-spanning stretches (helical) occupy residues 13-33 (GLLV…LYVM), 55-75 (ISLI…LIAL), 98-118 (WLVL…TLTP), 138-158 (IPVP…LFLF), 167-187 (IIGK…GLTG), 195-215 (LSLL…SPAN), 217-237 (VGVL…ALYS), 250-270 (SWPY…VWIL), 295-315 (FFAI…LITG), 344-364 (IFIP…VFLF), 375-395 (GLAI…YLSL), 400-420 (ILLR…FLIS), and 428-448 (GGYV…IWYF).

This sequence belongs to the HAK/KUP transporter (TC 2.A.72) family.

It localises to the cell membrane. It catalyses the reaction K(+)(in) + H(+)(in) = K(+)(out) + H(+)(out). Functionally, transport of potassium into the cell. Likely operates as a K(+):H(+) symporter. The polypeptide is Probable potassium transport system protein Kup 2 (Lactobacillus johnsonii (strain CNCM I-12250 / La1 / NCC 533)).